The sequence spans 101 residues: Small ribosomal subunit protein bS18c (101 aa).

It belongs to the bacterial ribosomal protein bS18 family. As to quaternary structure, part of the 30S ribosomal subunit.

It is found in the plastid. Its subcellular location is the chloroplast. This is Small ribosomal subunit protein bS18c from Coffea arabica (Arabian coffee).